The primary structure comprises 538 residues: Xylosidase/arabinosidase 43B (538 aa).

The active-site Proton donor is the Glu367.

The protein belongs to the glycosyl hydrolase 43 family.

The catalysed reaction is Hydrolysis of (1-&gt;4)-beta-D-xylans, to remove successive D-xylose residues from the non-reducing termini.. It carries out the reaction Hydrolysis of terminal non-reducing alpha-L-arabinofuranoside residues in alpha-L-arabinosides.. With respect to regulation, activity is inhibited by Ag(+), Li(+), Cu(2+), Cr(3+), Co(3+), Ni(2+), Mg(2+), Zn(2+), EDTA, SDS and beta-mercaptoethanol; but not by Mn(2+), Pb(2+), Ca(2+) and Fe(3+). Functionally, bifunctional beta-xylosidase/alpha-L-arabinosidases with a low level of xylanase activity. Is most active on 4-nitrophenyl beta-D-xylopyranoside (pNPX) (defined as 100%), moderate on p-nitrophenyl-alpha-L-arabinofuranoside (pNPA) (56.6%), and weak on beechwood xylan (5.7%) and birchwood xylan (2.7%). Is able to attack xylooligosacchardies with degrees of polymerisation of 2-5, releasing the amounts of reducing sugars in the order of xylopentose &gt; xylotetraose &gt; xylotriose &gt; xylobiose, i.e. the rate of xylose released from xylooligosacchardies increased with the chain length. No activity was detected in the presence of carboxymethyl cellulose-sodium (CMC-Na), sugar beet arabinan, AZCL-arabinan (debranched), 4-nitrophenyl a-D - galactopyranoside, 2-nitrophenyl beta-D-galactopyranoside, and 4-nitrophenyl alpha-D-glucopyranoside. The protein is Xylosidase/arabinosidase 43B of Humicola insolens (Soft-rot fungus).